The primary structure comprises 240 residues: uncharacterized protein (240 aa).

In terms of domain architecture, ABC transporter spans 2–223 (VRIQDLSLAF…GNAPRELHQA (222 aa)). ATP is bound at residue 34-41 (GSSGVGKS).

Belongs to the ABC transporter superfamily.

This is an uncharacterized protein from Haemophilus influenzae (strain ATCC 51907 / DSM 11121 / KW20 / Rd).